The following is a 720-amino-acid chain: MSDLGESPSSSPPAPPADTAPPPETPSENSALPPVDSSPPSPPADSSSTPPLSEPSTPPPDSQLPPLPSILPPLTDSPPPPSDSSPPVDSTPSPPPPTSNESPSPPEDSETPPAPPNESNDNNPPPSQDLQSPPPSSPSPNVGPTNPESPPLQSPPAPPASDPTNSPPASPLDPTNPPPIQPSGPATSPPANPNAPPSPFPTVPPKTPSSGPVVSPSLTSPSKGTPTPNQGNGDGGGGGGGYQGKTMVGMAVAGFAIMALIGVVFLVRRKKKRNIDSYNHSQYLPHPNFSVKSDGFLYGQDPGKGYSSGPNGSMYNNSQQQQSSMGNSYGTAGGGYPHHQMQSSGTPDSAILGSGQTHFSYEELAEITQGFARKNILGEGGFGCVYKGTLQDGKVVAVKQLKAGSGQGDREFKAEVEIISRVHHRHLVSLVGYCISDQHRLLIYEYVSNQTLEHHLHGKGLPVLEWSKRVRIAIGSAKGLAYLHEDCHPKIIHRDIKSANILLDDEYEAQVADFGLARLNDTTQTHVSTRVMGTFGYLAPEYASSGKLTDRSDVFSFGVVLLELVTGRKPVDQTQPLGEESLVEWARPLLLKAIETGDLSELIDTRLEKRYVEHEVFRMIETAAACVRHSGPKRPRMVQVVRALDCDGDSGDISNGIKIGQSTTYDSGQYNEDIMKFRKMAFGGDNSVESGLYSGNYSAKSSSDFSGNESETRPFNNRRF.

Positions 1–240 (MSDLGESPSS…GNGDGGGGGG (240 aa)) are disordered. At 1–246 (MSDLGESPSS…GGGGGYQGKT (246 aa)) the chain is on the extracellular side. The span at 10-25 (SSPPAPPADTAPPPET) shows a compositional bias: pro residues. Over residues 26 to 35 (PSENSALPPV) the composition is skewed to low complexity. 2 stretches are compositionally biased toward pro residues: residues 52 to 84 (LSEP…PSDS) and 92 to 116 (PSPP…PAPP). A glycan (N-linked (GlcNAc...) asparagine) is linked at N117. Pro residues-rich tracts occupy residues 123-138 (NPPP…PSSP) and 147-207 (PESP…PPKT). Residues 247–267 (MVGMAVAGFAIMALIGVVFLV) form a helical membrane-spanning segment. The Cytoplasmic portion of the chain corresponds to 268-720 (RRKKKRNIDS…ETRPFNNRRF (453 aa)). The tract at residues 300–349 (QDPGKGYSSGPNGSMYNNSQQQQSSMGNSYGTAGGGYPHHQMQSSGTPDS) is disordered. Over residues 311–330 (NGSMYNNSQQQQSSMGNSYG) the composition is skewed to low complexity. A Protein kinase domain is found at 371-624 (FARKNILGEG…EVFRMIETAA (254 aa)). ATP-binding positions include 377–385 (LGEGGFGCV) and K399. At Y444 the chain carries Phosphotyrosine. D495 serves as the catalytic Proton acceptor. Phosphoserine is present on S528. Residues T529 and T534 each carry the phosphothreonine modification. Y542 is modified (phosphotyrosine). The disordered stretch occupies residues 698-720 (SAKSSSDFSGNESETRPFNNRRF).

It belongs to the protein kinase superfamily. Ser/Thr protein kinase family. As to expression, mostly expressed in apical parts, including flower buds, and particularly in anthers. Also present in root hairs.

It is found in the cell membrane. The enzyme catalyses L-seryl-[protein] + ATP = O-phospho-L-seryl-[protein] + ADP + H(+). The catalysed reaction is L-threonyl-[protein] + ATP = O-phospho-L-threonyl-[protein] + ADP + H(+). Its function is as follows. Regulates the auxin-related MAX (More Axillary Growth) pathway during the shoot branching. The protein is Proline-rich receptor-like protein kinase PERK12 (PERK12) of Arabidopsis thaliana (Mouse-ear cress).